We begin with the raw amino-acid sequence, 400 residues long: Elongation factor Tu (400 aa).

A tr-type G domain is found at 10-208 (KPHVNVGTIG…AMDNYIPDPQ (199 aa)). Positions 19 to 26 (GHIDHGKS) are G1. 19-26 (GHIDHGKS) provides a ligand contact to GTP. Serine 26 is a binding site for Mg(2+). Residues 60 to 64 (GITIN) are G2. The tract at residues 81–84 (DCPG) is G3. GTP-binding positions include 81 to 85 (DCPGH) and 136 to 139 (NKTD). The tract at residues 136-139 (NKTD) is G4. Positions 174–176 (SAL) are G5.

Belongs to the TRAFAC class translation factor GTPase superfamily. Classic translation factor GTPase family. EF-Tu/EF-1A subfamily. Monomer.

Its subcellular location is the cytoplasm. The enzyme catalyses GTP + H2O = GDP + phosphate + H(+). GTP hydrolase that promotes the GTP-dependent binding of aminoacyl-tRNA to the A-site of ribosomes during protein biosynthesis. The protein is Elongation factor Tu of Thermotoga neapolitana (strain ATCC 49049 / DSM 4359 / NBRC 107923 / NS-E).